Reading from the N-terminus, the 68-residue chain is Disintegrin EMF10B (68 aa).

In terms of domain architecture, Disintegrin spans 1–68; it reads ELLQNSGNPC…SDCPRNPVFK (68 aa). 4 disulfide bridges follow: Cys10–Cys33, Cys24–Cys30, Cys29–Cys54, and Cys42–Cys61. A Cell attachment site; atypical (MGD) motif is present at residues 46–48; that stretch reads MGD.

The protein belongs to the venom metalloproteinase (M12B) family. P-II subfamily. P-IIe sub-subfamily. Heterodimer with EMF10A; disulfide-linked. Expressed by the venom gland.

It is found in the secreted. Functionally, extremely potent and selective inhibitor of integrin alpha-5/beta-1 (ITGA5/ITGB1). Partially inhibits adhesion of cells expressing alpha-IIb/beta-3 (ITGA2B/ITGB3), alpha-V/beta-3 (ITGAV/ITGB3), and alpha-4/beta-1 (ITGA4/ITGB1) to appropriate ligands only at concentration higher than 500 nM. Weakly inhibits ADP-induced platelet aggregation. In Eristicophis macmahoni (Leaf-nosed viper), this protein is Disintegrin EMF10B.